The sequence spans 301 residues: D-alanine--D-alanine ligase (301 aa).

In terms of domain architecture, ATP-grasp spans 99-293 (KRILAFGNVR…FEELLDTIIE (195 aa)). Residue 126–181 (IENLGYPVFIKPNNGGSSVATTLVESKEAVKDAVLEALKYDTEVMIEEYIKGDEIT) participates in ATP binding. Positions 248, 260, and 262 each coordinate Mg(2+).

This sequence belongs to the D-alanine--D-alanine ligase family. Requires Mg(2+) as cofactor. The cofactor is Mn(2+).

The protein localises to the cytoplasm. It catalyses the reaction 2 D-alanine + ATP = D-alanyl-D-alanine + ADP + phosphate + H(+). The protein operates within cell wall biogenesis; peptidoglycan biosynthesis. Functionally, cell wall formation. This chain is D-alanine--D-alanine ligase, found in Clostridium perfringens (strain SM101 / Type A).